Reading from the N-terminus, the 554-residue chain is Trichloroethene reductive dehalogenase (554 aa).

A signal peptide (tat-type signal) is located at residues 1-42; that stretch reads MSEKYHSTVTRRDFMKRLGLAGAGAGALGAAVLAENNLPHEF. 4Fe-4S ferredoxin-type domains are found at residues 425–457 and 471–500; these read PTKPIDAGIREFCKTCGICAEHCPTQAISHEGP and EGWHLDYHKCINCTICEAVCPFFTMSNNSW. Residues Cys-437, Cys-440, Cys-443, Cys-447, Cys-480, Cys-483, Cys-486, and Cys-490 each coordinate [4Fe-4S] cluster.

The protein belongs to the PceA family. Requires [4Fe-4S] cluster as cofactor. Corrinoid is required as a cofactor. Predicted to be exported by the Tat system. The position of the signal peptide cleavage has been experimentally proven.

It is found in the cell membrane. It carries out the reaction trichloroethene + AH2 = (Z)-1,2-dichloroethene + chloride + A + H(+). It catalyses the reaction (Z)-1,2-dichloroethene + AH2 = chloroethene + chloride + A + H(+). The catalysed reaction is 1,1-dichloroethene + AH2 = chloroethene + chloride + A + H(+). Its activity is regulated as follows. Loses 93% of its activity upon incubation with 1-iodopropane and titanium(III) citrate in the dark. Subsequent exposure to light restores 80% of the original activity. Completely inhibited by 2 mM sodium sulfite or sodium dithionite, and by 1 mM cuprous chloride. Catalyzes the reductive dechlorination of trichloroethene (TCE) to cis-1,2-dichloroethene (DCE) and of cis-1,2-dichloroethene to chloroethene. The substrate specificity is broad, and the enzyme can dehalogenate various substrates, including 1,1-dichloroethene (1,1-DCE), 1,2-dichloroethane and 1,2-dibromoethane. A variety of other haloalkanes and haloalkenes containing three to five carbon atoms are dehalogenated at lower rates. Trans-1,2-dichloroethene (trans-DCE) and chloroethene are degraded at rates which are approximately 2 orders of magnitude lower. Titanium(III) citrate and methyl viologen can be used as reductants. This Dehalococcoides mccartyi (strain ATCC BAA-2266 / KCTC 15142 / 195) (Dehalococcoides ethenogenes (strain 195)) protein is Trichloroethene reductive dehalogenase.